The following is a 309-amino-acid chain: Methionyl-tRNA formyltransferase (309 aa).

Residue Ser-109–Pro-112 coordinates (6S)-5,6,7,8-tetrahydrofolate.

This sequence belongs to the Fmt family.

It carries out the reaction L-methionyl-tRNA(fMet) + (6R)-10-formyltetrahydrofolate = N-formyl-L-methionyl-tRNA(fMet) + (6S)-5,6,7,8-tetrahydrofolate + H(+). Its function is as follows. Attaches a formyl group to the free amino group of methionyl-tRNA(fMet). The formyl group appears to play a dual role in the initiator identity of N-formylmethionyl-tRNA by promoting its recognition by IF2 and preventing the misappropriation of this tRNA by the elongation apparatus. The polypeptide is Methionyl-tRNA formyltransferase (Clostridioides difficile (strain 630) (Peptoclostridium difficile)).